The following is a 280-amino-acid chain: Formyltetrahydrofolate deformylase (280 aa).

In terms of domain architecture, ACT spans 8-86 (VLRTICPDQK…RELNPAGRRR (79 aa)). Asp-225 is an active-site residue.

It belongs to the PurU family. As to quaternary structure, homohexamer.

The enzyme catalyses (6R)-10-formyltetrahydrofolate + H2O = (6S)-5,6,7,8-tetrahydrofolate + formate + H(+). It functions in the pathway purine metabolism; IMP biosynthesis via de novo pathway; formate from 10-formyl-5,6,7,8-tetrahydrofolate: step 1/1. Its activity is regulated as follows. Activated by methionine, inhibited by glycine. Its function is as follows. Catalyzes the hydrolysis of 10-formyltetrahydrofolate (formyl-FH4) to formate and tetrahydrofolate (FH4). Provides the major source of formate for the PurT-dependent synthesis of 5'-phosphoribosyl-N-formylglycinamide (FGAR) during aerobic growth. Has a role in regulating the one-carbon pool. The polypeptide is Formyltetrahydrofolate deformylase (Escherichia coli (strain K12)).